Consider the following 400-residue polypeptide: MGAPLSTTRRGMGQNLSVPNPLGFFPEHQLDPLFRANSSSPDWDFNKNKDTWPMANKVGVGGYGPGFTPPHGGLLGWSPQAQGVLTTLPADPPPASTNRRSGRKPTPVSPPLRDTHPQAMQWNSTQFHQALLDPRVRALYFPAGGSSSETQNPAPTIASLTSSIFSKTGGPAMNMDSITSGLLGPLLVLQAVCFLLTKILTIPQSLDSWWTSLNFLGGLPGCPGQNSQSPTSNHLPTSCPPTCPGYRWMCLRRFIIFLFILLLCLIFLLVLLDYQGMLPVCPLIPGSTTTSTGPCKTCTTLAQGTSMFPSCCCSKPSDGNCTCIPIPSSWALGKYLWEWASARFSWLSLLVQFVQWCVGLSPTVWLLVIWMIWYWGPNLCSILSPFIPLLPIFCYLWVSI.

Met-1 carries the N-acetylmethionine modification. A lipid anchor (N-myristoyl glycine; by host) is attached at Gly-2. The segment at 2-119 (GAPLSTTRRG…PPLRDTHPQA (118 aa)) is pre-S1. Positions 2-174 (GAPLSTTRRG…FSKTGGPAMN (173 aa)) are pre-S. The Virion surface; in external conformation portion of the chain corresponds to 2 to 181 (GAPLSTTRRG…AMNMDSITSG (180 aa)). Over 2–253 (GAPLSTTRRG…PGYRWMCLRR (252 aa)) the chain is Intravirion; in internal conformation. Residue Pro-4 is glycosylated (N-linked (GlcNAc...) asparagine). Residues 84 to 114 (VLTTLPADPPPASTNRRSGRKPTPVSPPLRD) are disordered. The pre-S2 stretch occupies residues 120–174 (MQWNSTQFHQALLDPRVRALYFPAGGSSSETQNPAPTIASLTSSIFSKTGGPAMN). Residues 182–202 (LLGPLLVLQAVCFLLTKILTI) traverse the membrane as a helical segment. Residues 203–253 (PQSLDSWWTSLNFLGGLPGCPGQNSQSPTSNHLPTSCPPTCPGYRWMCLRR) are Intravirion; in external conformation-facing. A helical transmembrane segment spans residues 254–274 (FIIFLFILLLCLIFLLVLLDY). Residues 275–348 (QGMLPVCPLI…WASARFSWLS (74 aa)) lie on the Virion surface side of the membrane. N-linked (GlcNAc...) asparagine; by host glycosylation is present at Asn-320. Residues 349 to 369 (LLVQFVQWCVGLSPTVWLLVI) traverse the membrane as a helical segment. Residues 370 to 375 (WMIWYW) are Intravirion-facing. The chain crosses the membrane as a helical span at residues 376-398 (GPNLCSILSPFIPLLPIFCYLWV). The Virion surface portion of the chain corresponds to 399 to 400 (SI).

The protein belongs to the orthohepadnavirus major surface antigen family. As to quaternary structure, in its internal form (Li-HBsAg), interacts with the capsid protein and with the isoform S. Interacts with host chaperone CANX. Associates with host chaperone CANX through its pre-S2 N glycan; this association may be essential for isoform M proper secretion. In terms of assembly, interacts with isoform L. Interacts with the antigens of satellite virus HDV (HDVAgs); this interaction is required for encapsidation of HDV genomic RNA. Isoform M is N-terminally acetylated by host at a ratio of 90%, and N-glycosylated by host at the pre-S2 region. In terms of processing, myristoylated.

It localises to the virion membrane. In terms of biological role, the large envelope protein exists in two topological conformations, one which is termed 'external' or Le-HBsAg and the other 'internal' or Li-HBsAg. In its external conformation the protein attaches the virus to cell receptors and thereby initiating infection. This interaction determines the species specificity and liver tropism. This attachment induces virion internalization predominantly through caveolin-mediated endocytosis. The large envelope protein also assures fusion between virion membrane and endosomal membrane. In its internal conformation the protein plays a role in virion morphogenesis and mediates the contact with the nucleocapsid like a matrix protein. Its function is as follows. The middle envelope protein plays an important role in the budding of the virion. It is involved in the induction of budding in a nucleocapsid independent way. In this process the majority of envelope proteins bud to form subviral lipoprotein particles of 22 nm of diameter that do not contain a nucleocapsid. The sequence is that of Large envelope protein from Homo sapiens (Human).